The following is a 197-amino-acid chain: Large ribosomal subunit protein bL25 (197 aa).

This sequence belongs to the bacterial ribosomal protein bL25 family. CTC subfamily. As to quaternary structure, part of the 50S ribosomal subunit; part of the 5S rRNA/L5/L18/L25 subcomplex. Contacts the 5S rRNA. Binds to the 5S rRNA independently of L5 and L18.

Functionally, this is one of the proteins that binds to the 5S RNA in the ribosome where it forms part of the central protuberance. This is Large ribosomal subunit protein bL25 from Pseudomonas putida (strain GB-1).